A 174-amino-acid chain; its full sequence is RNA pyrophosphohydrolase (174 aa).

Positions 6-149 constitute a Nudix hydrolase domain; sequence GYRPNVGIIL…KRDVYLGALK (144 aa). The short motif at 38–59 is the Nudix box element; it reads GGIKPGESPETAMYRELYEEVG.

This sequence belongs to the Nudix hydrolase family. RppH subfamily. A divalent metal cation serves as cofactor.

Functionally, accelerates the degradation of transcripts by removing pyrophosphate from the 5'-end of triphosphorylated RNA, leading to a more labile monophosphorylated state that can stimulate subsequent ribonuclease cleavage. The protein is RNA pyrophosphohydrolase of Neisseria meningitidis serogroup C (strain 053442).